A 388-amino-acid polypeptide reads, in one-letter code: Succinate--CoA ligase [ADP-forming] subunit beta (388 aa).

Residues 9–244 (KEIFRSMGVA…LEEEDPKEIE (236 aa)) enclose the ATP-grasp domain. ATP contacts are provided by residues Lys46, 53–55 (GRG), Glu99, Cys102, and Glu107. Residues Asn199 and Asp213 each contribute to the Mg(2+) site. Residues Asn264 and 321-323 (GIM) each bind substrate.

It belongs to the succinate/malate CoA ligase beta subunit family. As to quaternary structure, heterotetramer of two alpha and two beta subunits. Mg(2+) serves as cofactor.

The enzyme catalyses succinate + ATP + CoA = succinyl-CoA + ADP + phosphate. The catalysed reaction is GTP + succinate + CoA = succinyl-CoA + GDP + phosphate. It participates in carbohydrate metabolism; tricarboxylic acid cycle; succinate from succinyl-CoA (ligase route): step 1/1. Succinyl-CoA synthetase functions in the citric acid cycle (TCA), coupling the hydrolysis of succinyl-CoA to the synthesis of either ATP or GTP and thus represents the only step of substrate-level phosphorylation in the TCA. The beta subunit provides nucleotide specificity of the enzyme and binds the substrate succinate, while the binding sites for coenzyme A and phosphate are found in the alpha subunit. The sequence is that of Succinate--CoA ligase [ADP-forming] subunit beta from Staphylococcus aureus (strain MRSA252).